We begin with the raw amino-acid sequence, 394 residues long: Phosphopentomutase (394 aa).

Mn(2+) is bound by residues Asp14, Asp287, His292, Asp328, His329, and His340.

It belongs to the phosphopentomutase family. It depends on Mn(2+) as a cofactor.

It localises to the cytoplasm. The enzyme catalyses 2-deoxy-alpha-D-ribose 1-phosphate = 2-deoxy-D-ribose 5-phosphate. It catalyses the reaction alpha-D-ribose 1-phosphate = D-ribose 5-phosphate. It functions in the pathway carbohydrate degradation; 2-deoxy-D-ribose 1-phosphate degradation; D-glyceraldehyde 3-phosphate and acetaldehyde from 2-deoxy-alpha-D-ribose 1-phosphate: step 1/2. Its function is as follows. Isomerase that catalyzes the conversion of deoxy-ribose 1-phosphate (dRib-1-P) and ribose 1-phosphate (Rib-1-P) to deoxy-ribose 5-phosphate (dRib-5-P) and ribose 5-phosphate (Rib-5-P), respectively. The chain is Phosphopentomutase from Listeria monocytogenes serovar 1/2a (strain ATCC BAA-679 / EGD-e).